We begin with the raw amino-acid sequence, 574 residues long: MWALRGCRSGSRWGQGAALLLLLLGVPPRGLALPPLRYSHAGICPNDMNPNLWVDAQSTCKRECETDQECETYEKCCPNVCGTKSCVAARYMDVKGKKGPVGMPKEATCDHFMCLQQGSECDIWDGQPVCKCRDRCEKEPSFTCASDGLTYYNRCYMDAEACSKGITLAVVTCRYHFTWPNTSPSPPETTVHPTTAPPETPGLDATAPALLNHPAHQSVTVGETVSFLCDVVGRPRPEITWEKQLEDRENVVMRPNHVRGNVVVTNIAQLVIYNAQPQDAGIYTCTARNAAGVLRADFPLSVVSGGQASATAESSPNGTALPAAECLKPPDSDDCGEEQTRWYFDAQANNCLTFTFGHCHRNRNHFETYEACMLACMSGSLAMCSLPALQGPCKAYVPRWAYNSQTGQCQSFVYGGCEGNGNNFESREDCEESCPFPRGNQRCRACKPRQKLVTSFCRSDFVILGRISELTEEPDSGRALVTVDEVLKDEKMGLKFLGQEPLEVTLLHMDWTCPCPNVTVGEAPLIIMGEVDGGMAVLRPDSFVGASSTRRARKLREVMHKKTCDVLKDFPGLQ.

An N-terminal signal peptide occupies residues 1–32; it reads MWALRGCRSGSRWGQGAALLLLLLGVPPRGLA. The region spanning 37 to 90 is the WAP domain; the sequence is RYSHAGICPNDMNPNLWVDAQSTCKRECETDQECETYEKCCPNVCGTKSCVAAR. 17 disulfide bridges follow: cysteine 44–cysteine 77, cysteine 60–cysteine 81, cysteine 64–cysteine 76, cysteine 70–cysteine 86, cysteine 132–cysteine 162, cysteine 136–cysteine 155, cysteine 144–cysteine 173, cysteine 229–cysteine 285, cysteine 326–cysteine 376, cysteine 335–cysteine 359, cysteine 351–cysteine 372, cysteine 384–cysteine 434, cysteine 393–cysteine 417, cysteine 409–cysteine 430, cysteine 443–cysteine 513, cysteine 446–cysteine 515, and cysteine 457–cysteine 564. Residues 124 to 175 enclose the Kazal-like domain; the sequence is WDGQPVCKCRDRCEKEPSFTCASDGLTYYNRCYMDAEACSKGITLAVVTCRY. Positions 208 to 301 constitute an Ig-like C2-type domain; the sequence is PALLNHPAHQ…GVLRADFPLS (94 aa). BPTI/Kunitz inhibitor domains follow at residues 326–376 and 384–434; these read CLKP…MLAC and CSLP…EESC. The NTR domain maps to 443–564; it reads CRACKPRQKL…LREVMHKKTC (122 aa). Asparagine 517 is a glycosylation site (N-linked (GlcNAc...) asparagine).

It belongs to the WFIKKN family. As to quaternary structure, interacts with both mature and propeptide myostatin/MSTN.

It localises to the secreted. Functionally, protease-inhibitor that contains multiple distinct protease inhibitor domains. Probably has serine protease- and metalloprotease-inhibitor activity. Inhibits the biological activity of mature myostatin, but not activin. The polypeptide is WAP, Kazal, immunoglobulin, Kunitz and NTR domain-containing protein 2 (WFIKKN2) (Bos taurus (Bovine)).